Consider the following 843-residue polypeptide: MSQGWRGGWSGGRGGNPYAGGWRGRPWRGRGQGGSWSRNSGRDPVCFSTAPPKPQLTQTTLDKYIPYKGWKLYFSEAYSDSSPFLEKVRAFEKFFTKQIELYDKDEIERKGSILVDYKDLLQDEDLSASIPMSSELKEMPEKILECMGLAIHQVLTKDLERHAAELQEQEGLRTEEAPIVNVPFIHARVFNYDPLTPLKNLRASLYGKYVALRGTVVRVSNIKPLCVKMAFSCNMCGDIQSFPFPDGKYAVPTKCPVPECRGRSFTANRSSPLTVTVDWQTIKVQELMSDDQREAGRIPRTVECELIQDLVDSCVPGDMVTVTGIVKVSNTRDGGFKNKNNKCMFLLYIEANSVSNSKGHKIKSTDDSESHGASMDFSLKDLYAIQEIQAQENLFQLIVNSLCPTIYGHELVKAGLSLALFGGCQKYADDKNRIPIRGDPHILVVGDPGLGKSQMLQAVCNVAPRGVYVCGNTTTTSGLTVTLSRDSATGDFGLEAGALILGDQGICGIDEFDKMGNQHQALLEAMEQQSISLAKAGIVCSLPARTSIIAAANPVGGHYNKGKTVSENLKMGSALLSRFDLVFILLDTPNEDHDHLLSEHVMAMRAGAKEMQSADLTCPTTQNSNTSVLEEPSERPLGERLKLRPGEHFDPIPHQLLRKYVGYARQYVHPTLSPDAAQVLQDFYLELRKQNQGIDSTPITTRQLESLIRLTEARARLELREKATKDDAEEVVQIMKYSLLGTFSDEFGKLDFHRSQHGSGMSNRSKAKKFISALNRIAEQTYNNLFEFQQLRQIAKELQIQLLGKFNHSDKMATEIPNLRAAPGNQLRPKGSVSVLITTWDCA.

The span at 1–23 (MSQGWRGGWSGGRGGNPYAGGWR) shows a compositional bias: gly residues. The segment at 1 to 52 (MSQGWRGGWSGGRGGNPYAGGWRGRPWRGRGQGGSWSRNSGRDPVCFSTAPP) is disordered. An MCM domain is found at 394-601 (LFQLIVNSLC…DHDHLLSEHV (208 aa)). Residue 446-453 (GDPGLGKS) coordinates ATP.

The protein belongs to the MCM family. In terms of assembly, component of the MCM8-MCM9 complex, which forms a hexamer composed of mcm8 and mcm9.

It is found in the nucleus. It carries out the reaction ATP + H2O = ADP + phosphate + H(+). In terms of biological role, component of the MCM8-MCM9 complex, a complex involved in homologous recombination repair following DNA interstrand cross-links and plays a key role during gametogenesis. The MCM8-MCM9 complex probably acts as a hexameric helicase required to process aberrant forks into homologous recombination substrates and to orchestrate homologous recombination with resection, fork stabilization and fork restart. In eggs, required for elongation during DNA replication by facilitating the recruitment of rpa2/rpa34 and stimulating the processivity of DNA polymerases at replication foci. Probably not required for DNA replication in other cells. In Xenopus tropicalis (Western clawed frog), this protein is DNA helicase MCM8 (mcm8).